Here is a 375-residue protein sequence, read N- to C-terminus: Succinyl-diaminopimelate desuccinylase (375 aa).

His-66 is a binding site for Zn(2+). Residue Asp-68 is part of the active site. Asp-99 serves as a coordination point for Zn(2+). The active-site Proton acceptor is the Glu-133. Positions 134, 162, and 348 each coordinate Zn(2+).

The protein belongs to the peptidase M20A family. DapE subfamily. In terms of assembly, homodimer. Zn(2+) is required as a cofactor. It depends on Co(2+) as a cofactor.

It carries out the reaction N-succinyl-(2S,6S)-2,6-diaminopimelate + H2O = (2S,6S)-2,6-diaminopimelate + succinate. It functions in the pathway amino-acid biosynthesis; L-lysine biosynthesis via DAP pathway; LL-2,6-diaminopimelate from (S)-tetrahydrodipicolinate (succinylase route): step 3/3. Functionally, catalyzes the hydrolysis of N-succinyl-L,L-diaminopimelic acid (SDAP), forming succinate and LL-2,6-diaminopimelate (DAP), an intermediate involved in the bacterial biosynthesis of lysine and meso-diaminopimelic acid, an essential component of bacterial cell walls. In Salmonella dublin (strain CT_02021853), this protein is Succinyl-diaminopimelate desuccinylase.